A 337-amino-acid chain; its full sequence is uncharacterized protein (337 aa).

29–36 (GPKSSGKS) provides a ligand contact to ATP.

This sequence belongs to the archaeal ATPase family.

This is an uncharacterized protein from Methanocaldococcus jannaschii (strain ATCC 43067 / DSM 2661 / JAL-1 / JCM 10045 / NBRC 100440) (Methanococcus jannaschii).